The chain runs to 480 residues: MSKKEKQFVEEITPMEVDFAQWYTDVIKKTDLVDYSPVKGFMVIKPYGYAIWENIQNYMDKRFKETGHKNCYFPLLIPESLLKKEAEHVEGFAPEVAWVTHGGNEELAERLCVRPTSETIICEMYSKWLTSYRDLPFLYNQWCSVVRWEKSTRPFLRTSEFLWQEGHTLHETYEEAQAETLQMLNIYRETAENLLAMPVVIGQKSEKEKFAGAYATYTMEALMHDGKALQAGTSHNLGQHFTTAFDITYSDRNGELKHPYHTSWGVSTRLIGGIIMVHGDNRGLVLPPGIAPTQVVIVPVASHKEGVLDKANELRDRLKDKFRVELDDRDNYSPGWKFNEWEMKGVPIRIEIGPRDIENNQAMLFRRDELEKDAVSLDDLEEAVEKLLEDINNNLLYKAKMMRDEKTYIVKTFDEMKEVMEIKPGFVKAMWCGERACEEHVKAETGVTIRCIPFEQENLGHTCAFCGKEAKHMVYLAKAY.

It belongs to the class-II aminoacyl-tRNA synthetase family. ProS type 3 subfamily. In terms of assembly, homodimer.

It is found in the cytoplasm. The catalysed reaction is tRNA(Pro) + L-proline + ATP = L-prolyl-tRNA(Pro) + AMP + diphosphate. Catalyzes the attachment of proline to tRNA(Pro) in a two-step reaction: proline is first activated by ATP to form Pro-AMP and then transferred to the acceptor end of tRNA(Pro). This Alkaliphilus oremlandii (strain OhILAs) (Clostridium oremlandii (strain OhILAs)) protein is Proline--tRNA ligase.